Consider the following 337-residue polypeptide: Diacylglycerol O-acyltransferase 2-like protein 6 (337 aa).

2 consecutive transmembrane segments (helical) span residues 22-42 (IPVY…FLLF) and 102-122 (YIIA…NFAT).

The protein belongs to the diacylglycerol acyltransferase family. As to expression, expressed in all tissues tested except pancreas.

The protein localises to the endoplasmic reticulum membrane. The catalysed reaction is 1,2-di-(9Z-octadecenoyl)-sn-glycerol + (9Z)-octadecenoyl-CoA = 1,2,3-tri-(9Z-octadecenoyl)-glycerol + CoA. The enzyme catalyses 1-O-(9Z-octadecenyl)-glycerol + (9Z)-octadecenoyl-CoA = 1-O-(9Z-octadecyl)-3-(9Z-octadecenoyl)-glycerol + CoA. It carries out the reaction 1-(9Z-octadecenoyl)-glycerol + (9Z)-octadecenoyl-CoA = 1,2-di-(9Z-octadecenoyl)-glycerol + CoA. Its function is as follows. Diglyceride acyltransferase that uses fatty acyl-CoA as substrate. Particularly active with oleate as a substrate. Has no wax synthase activity to produce wax esters. Able to use 1-monoalkylglycerol (1-MAkG) as an acyl acceptor for the synthesis of monoalkyl-monoacylglycerol (MAMAG). This Homo sapiens (Human) protein is Diacylglycerol O-acyltransferase 2-like protein 6.